We begin with the raw amino-acid sequence, 156 residues long: Large ribosomal subunit protein eL24 (156 aa).

Residues 110 to 123 (RAAKEKQKQKELEK) are compositionally biased toward basic and acidic residues. The interval 110–156 (RAAKEKQKQKELEKKAKKVEKKKPTLAPKQKAAKITQKPAPRVGGKR) is disordered.

Belongs to the eukaryotic ribosomal protein eL24 family.

This chain is Large ribosomal subunit protein eL24 (RPL24), found in Schistosoma japonicum (Blood fluke).